A 299-amino-acid chain; its full sequence is Putative KilA-N domain-containing protein R879 (299 aa).

One can recognise a KilA-N domain in the interval 1 to 75 (MKSDNGILMS…IKVSEIVLSY (75 aa)). Positions 76 to 150 (HAKEAIKEKE…DKKINELLSK (75 aa)) form a coiled coil.

This is Putative KilA-N domain-containing protein R879 from Acanthamoeba polyphaga mimivirus (APMV).